An 800-amino-acid chain; its full sequence is Phenylalanine--tRNA ligase beta subunit (800 aa).

In terms of domain architecture, tRNA-binding spans 39-154; sequence TKDIKKLVVG…EAVKPGTDAL (116 aa). One can recognise a B5 domain in the interval 408-483; the sequence is SFVTPIEITA…RIYGYDEIPS (76 aa). Mg(2+) contacts are provided by Asp461, Asp467, Glu470, and Glu471. The region spanning 708 to 800 is the FDX-ACB domain; the sequence is PRFPGVTRDI…ALKKHGAIIR (93 aa).

The protein belongs to the phenylalanyl-tRNA synthetase beta subunit family. Type 1 subfamily. Tetramer of two alpha and two beta subunits. Mg(2+) is required as a cofactor.

The protein localises to the cytoplasm. The enzyme catalyses tRNA(Phe) + L-phenylalanine + ATP = L-phenylalanyl-tRNA(Phe) + AMP + diphosphate + H(+). This Staphylococcus epidermidis (strain ATCC 12228 / FDA PCI 1200) protein is Phenylalanine--tRNA ligase beta subunit.